Consider the following 198-residue polypeptide: Large ribosomal subunit protein eL18 (198 aa).

Residues 157-198 (RHFGASGVPGSHSKPYATNRGKETKRGRRTGRSYKRKAFRHV) are disordered. The segment covering 179–198 (ETKRGRRTGRSYKRKAFRHV) has biased composition (basic residues).

This sequence belongs to the eukaryotic ribosomal protein eL18 family.

Its subcellular location is the cytoplasm. This Leishmania major protein is Large ribosomal subunit protein eL18 (RPL18-A).